Consider the following 398-residue polypeptide: 1,4-beta-D-glucan cellobiohydrolase CEL6C (398 aa).

The first 18 residues, 1 to 18 (MKITSSAAALALVASAVA), serve as a signal peptide directing secretion. N70 carries an N-linked (GlcNAc...) asparagine glycan. The active site involves D125. The active-site Proton donor is D170. 4 residues coordinate substrate: W218, W318, K346, and E350.

This sequence belongs to the glycosyl hydrolase 6 (cellulase B) family. Post-translationally, both N- and O-glycosylated.

The protein localises to the secreted. It carries out the reaction Hydrolysis of (1-&gt;4)-beta-D-glucosidic linkages in cellulose and cellotetraose, releasing cellobiose from the non-reducing ends of the chains.. Functionally, exoglucanase that plays an important function in biomass degradation by catalyzing the hydrolysis of the non-reducing end beta-1,4-glucosidic linkages in cellulose and cellotetraose to release cellobiose. Hydrolyzes crystalline and amorphous cellulose but is inactive on hydroxyethyl cellulose, mannan, galactomannan, xyloglucan, arabinoxylan, arabinan, xylan, and pectin. This chain is 1,4-beta-D-glucan cellobiohydrolase CEL6C, found in Podospora anserina (strain S / ATCC MYA-4624 / DSM 980 / FGSC 10383) (Pleurage anserina).